A 263-amino-acid polypeptide reads, in one-letter code: Cobalt-precorrin-6A reductase (263 aa).

The protein belongs to the precorrin-6x reductase family.

The catalysed reaction is Co-precorrin-6B + NAD(+) = Co-precorrin-6A + NADH + H(+). It functions in the pathway cofactor biosynthesis; adenosylcobalamin biosynthesis; cob(II)yrinate a,c-diamide from sirohydrochlorin (anaerobic route): step 7/10. In terms of biological role, catalyzes the reduction of the macrocycle of cobalt-precorrin-6A to cobalt-precorrin-6B. This chain is Cobalt-precorrin-6A reductase (cbiJ), found in Salmonella typhimurium (strain LT2 / SGSC1412 / ATCC 700720).